A 404-amino-acid chain; its full sequence is Deoxyguanosinetriphosphate triphosphohydrolase-like protein (404 aa).

Residues 1–33 are disordered; it reads MSVGMAAPRAAYGCDPDRSRGRQFAEPPSNNRS. Residues 69–217 enclose the HD domain; it reads RLTHSLEVAQ…AAIADDIAYD (149 aa).

The protein belongs to the dGTPase family. Type 2 subfamily.

This chain is Deoxyguanosinetriphosphate triphosphohydrolase-like protein, found in Rhodopseudomonas palustris (strain BisB5).